We begin with the raw amino-acid sequence, 310 residues long: Uracil phosphoribosyltransferase homolog (310 aa).

2 disordered regions span residues 1–27 (MASE…PSPE) and 62–89 (SERD…GNYD). Positions 16 to 25 (RQVNSTSSPS) are enriched in polar residues. The residue at position 25 (serine 25) is a Phosphoserine. Residues arginine 134, arginine 143, and 177–180 (EKGN) each bind GTP. Arginine 187 contacts 5-phospho-alpha-D-ribose 1-diphosphate. GTP is bound by residues arginine 204 and arginine 233. Residue 239–247 (YPILSTGNT) coordinates 5-phospho-alpha-D-ribose 1-diphosphate. 300–302 (THF) serves as a coordination point for uracil.

The protein belongs to the UPRTase family.

The protein localises to the cytoplasm. Its subcellular location is the nucleus. The polypeptide is Uracil phosphoribosyltransferase homolog (Uprt) (Mus musculus (Mouse)).